The chain runs to 301 residues: Acetylglutamate kinase (301 aa).

Residues 68-69 (GG), Arg-90, and Asn-195 contribute to the substrate site.

This sequence belongs to the acetylglutamate kinase family. ArgB subfamily.

The protein localises to the cytoplasm. It catalyses the reaction N-acetyl-L-glutamate + ATP = N-acetyl-L-glutamyl 5-phosphate + ADP. It functions in the pathway amino-acid biosynthesis; L-arginine biosynthesis; N(2)-acetyl-L-ornithine from L-glutamate: step 2/4. Functionally, catalyzes the ATP-dependent phosphorylation of N-acetyl-L-glutamate. The protein is Acetylglutamate kinase of Pseudomonas aeruginosa (strain LESB58).